A 120-amino-acid polypeptide reads, in one-letter code: Small ribosomal subunit protein uS13 (120 aa).

Residues 92–120 (RRGLPCRGQRTRTNARTRKGPRKPIAGKK) are disordered.

It belongs to the universal ribosomal protein uS13 family. Part of the 30S ribosomal subunit. Forms a loose heterodimer with protein S19. Forms two bridges to the 50S subunit in the 70S ribosome.

Its function is as follows. Located at the top of the head of the 30S subunit, it contacts several helices of the 16S rRNA. In the 70S ribosome it contacts the 23S rRNA (bridge B1a) and protein L5 of the 50S subunit (bridge B1b), connecting the 2 subunits; these bridges are implicated in subunit movement. Contacts the tRNAs in the A and P-sites. The sequence is that of Small ribosomal subunit protein uS13 from Laribacter hongkongensis (strain HLHK9).